The following is a 236-amino-acid chain: MQPTEISPGLVVNVATPDLKLSDFKLIAFDMDSTLINIECVDEIADAAGRKAEVAAITEAAMRGEISDYKESLRQRVALLKGVSVASMDEVYRTRLRLNPGAARLVQACKDAGLKVLLVSGGFTFFTDRIRDELGIDYTRSNVLETTDGLLTGRMVDQPWGDICDGEEKRKMLLETCGQLGISPRQAIAMGDGANDLPMMGEAGLSVAYHAKPRVREQAMVAINEGGLDRLLELVK.

Residue Asp30 is the Nucleophile of the active site. Mg(2+) contacts are provided by Asp30 and Asp32. The active-site Proton donor is the Asp32. Substrate contacts are provided by residues Glu39, Arg76, 120-121 (SG), and Lys169. Asp192 lines the Mg(2+) pocket. Asn195 contributes to the substrate binding site.

The protein belongs to the HAD-like hydrolase superfamily. SerB family. Mg(2+) is required as a cofactor.

It carries out the reaction O-phospho-L-serine + H2O = L-serine + phosphate. It catalyses the reaction O-phospho-D-serine + H2O = D-serine + phosphate. It functions in the pathway amino-acid biosynthesis; L-serine biosynthesis; L-serine from 3-phospho-D-glycerate: step 3/3. In Polaromonas sp. (strain JS666 / ATCC BAA-500), this protein is Phosphoserine phosphatase.